Here is a 284-residue protein sequence, read N- to C-terminus: Tropomyosin (284 aa).

Positions 1-47 (MDAIKKKMQAMKIEKDNAMDRADAAEEKARQQQERVEKLEEELRDTQ) are disordered. A coiled-coil region spans residues 1–284 (MDAIKKKMQA…DQTFQELSGY (284 aa)). The span at 12-38 (KIEKDNAMDRADAAEEKARQQQERVEK) shows a compositional bias: basic and acidic residues.

It belongs to the tropomyosin family.

Functionally, tropomyosin, in association with the troponin complex, plays a central role in the calcium dependent regulation of muscle contraction. The protein is Tropomyosin of Trichinella spiralis (Trichina worm).